Reading from the N-terminus, the 142-residue chain is Hemoglobin cathodic subunit alpha (142 aa).

Serine 1 is modified (N-acetylserine). The 142-residue stretch at 1–142 folds into the Globin domain; that stretch reads SLTAKDKALV…LSSTAADKYR (142 aa). Histidine 59 provides a ligand contact to O2. Residue histidine 88 coordinates heme b.

It belongs to the globin family. Heterotetramer of two alpha chains and two beta chains.

Functionally, involved in oxygen transport from gills to the various peripheral tissues. The chain is Hemoglobin cathodic subunit alpha from Hoplosternum littorale (Hassar).